We begin with the raw amino-acid sequence, 417 residues long: UDP-N-acetylglucosamine 1-carboxyvinyltransferase (417 aa).

Phosphoenolpyruvate is bound at residue 22-23 (KN). R92 contributes to the UDP-N-acetyl-alpha-D-glucosamine binding site. C116 acts as the Proton donor in catalysis. A 2-(S-cysteinyl)pyruvic acid O-phosphothioketal modification is found at C116. UDP-N-acetyl-alpha-D-glucosamine-binding residues include D304 and I326.

The protein belongs to the EPSP synthase family. MurA subfamily.

It is found in the cytoplasm. The catalysed reaction is phosphoenolpyruvate + UDP-N-acetyl-alpha-D-glucosamine = UDP-N-acetyl-3-O-(1-carboxyvinyl)-alpha-D-glucosamine + phosphate. It functions in the pathway cell wall biogenesis; peptidoglycan biosynthesis. Its function is as follows. Cell wall formation. Adds enolpyruvyl to UDP-N-acetylglucosamine. This Geobacter sulfurreducens (strain ATCC 51573 / DSM 12127 / PCA) protein is UDP-N-acetylglucosamine 1-carboxyvinyltransferase.